A 271-amino-acid chain; its full sequence is Putative carboxymethylenebutenolidase (271 aa).

Active-site residues include C147, D204, and H236.

Belongs to the dienelactone hydrolase family.

It catalyses the reaction 2-(5-oxo-2,5-dihydrofuran-2-ylidene)acetate + H2O = 4-oxohex-2-enedioate + H(+). This is Putative carboxymethylenebutenolidase (ysgA) from Escherichia coli (strain K12).